The primary structure comprises 662 residues: Cytochrome bo(3) ubiquinol oxidase subunit 1 (662 aa).

Topologically, residues 1 to 14 are extracellular; it reads MFGKLTFDAIPYHE. A helical membrane pass occupies residues 15-35; the sequence is PIIMITYIAIILIALCIASTI. The Cytoplasmic segment spans residues 36-58; that stretch reads TYYKKWKYLWYEWFTTVDHKKIS. Residues 59–79 traverse the membrane as a helical segment; that stretch reads IMYGILAFVMLFRGFVDAILM. Residues Arg71, Asp75, and His98 each coordinate a ubiquinone. Residues 80–106 are Extracellular-facing; sequence RTQQVVASAGFKGFLPPHHYDQIFTAH. His106 is a heme b binding site. Residues 107–127 form a helical membrane-spanning segment; the sequence is GVIMIFFVAMPLVIGLMNLVI. Over 128-145 the chain is Cytoplasmic; that stretch reads PLQIGARDVAFPFLNNLS. A helical membrane pass occupies residues 146–166; the sequence is FWLNVSSAVLLTLSLGIGEFA. Residues 167-189 lie on the Extracellular side of the membrane; it reads QTGWLAYPPLSGIKYSSGVGVDY. A heme b-binding site is contributed by Trp170. The helical transmembrane segment at 190-210 threads the bilayer; that stretch reads WIWSLQISGVGTTLTGINFLV. Over 211–232 the chain is Cytoplasmic; that stretch reads TILKMRAPGMSFFKMPVFTWTS. Residues 233–253 traverse the membrane as a helical segment; the sequence is LCTNILIVISFPVLTVTLVLL. Residues 254–277 are Extracellular-facing; it reads TLDRYFNFHFFTNDLGGNAMMYVN. Residues 278–298 form a helical membrane-spanning segment; sequence LIWIWGHPEVYILVLPVFGVF. Position 284 (His284) interacts with Cu(2+). A cross-link (1'-histidyl-3'-tyrosine (His-Tyr)) is located at residues 284 to 288; it reads HPEVY. Fe(II)-heme o is bound at residue Tyr288. Residues 299–309 are Cytoplasmic-facing; sequence SEVVATFSKKR. Residues 310–330 traverse the membrane as a helical segment; sequence LFGYVSLVWATLSITILSFIV. Over 331–346 the chain is Extracellular; it reads WLHHFFTMGAGADVNT. His333 and His334 together coordinate Cu(2+). A helical transmembrane segment spans residues 347 to 367; that stretch reads FFGITTMIIAIPTGVKIFNWL. Over 368-380 the chain is Cytoplasmic; it reads FTIYQGRVHMHSS. A helical transmembrane segment spans residues 381 to 401; that stretch reads ILWTLGFLVTFSIGGMTGVLL. Over 402–413 the chain is Extracellular; the sequence is SVPPADFVLHNS. The Fe(II)-heme o site is built by His411 and His419. A helical membrane pass occupies residues 414–434; sequence LFLVAHFHNVIIGGVVFGCFA. His421 contributes to the heme b binding site. Over 435 to 456 the chain is Cytoplasmic; that stretch reads GINYWFPKLFGFVLNEIWGKRA. Residues 457-477 form a helical membrane-spanning segment; the sequence is FWFWIIGFFLAFIPLYFLGLM. At 478–493 the chain is on the extracellular side; sequence GMTRRLSQNIDSEFHM. Arg481 and Arg482 together coordinate heme b. Residues 494-514 form a helical membrane-spanning segment; it reads LLCIAAIGACFIGIGIICQVI. Residues 515-586 lie on the Cytoplasmic side of the membrane; the sequence is QFFISIKERR…INSINYHDIH (72 aa). A helical transmembrane segment spans residues 587–607; that stretch reads MPKNTGLGFMISIFSLFFGFS. Ala608 is a topological domain (extracellular). A helical transmembrane segment spans residues 609 to 629; it reads VWHITWLCILSFLAIIISLFI. The Cytoplasmic segment spans residues 630 to 662; that stretch reads NSLNEDTEYTISAEEIKKIEHQYWKNIQKAGLK.

It belongs to the heme-copper respiratory oxidase family. In terms of assembly, the cytochrome bo(3) ubiquinol oxidase complex is a heterooctamer of two A chains, two B chains, two C chains and two D chains. Cu(2+) is required as a cofactor. Requires heme b as cofactor. Fe(II)-heme o serves as cofactor.

Its subcellular location is the cell membrane. It carries out the reaction 2 a ubiquinol + O2 + n H(+)(in) = 2 a ubiquinone + 2 H2O + n H(+)(out). Its function is as follows. Cytochrome bo(3) ubiquinol oxidase is the terminal enzyme in the aerobic respiratory chain. Catalyzes the four-electron reduction of O2 to water, using a ubiquinol as a membrane soluble electron donor for molecular oxygen reduction. Has proton pump activity across the membrane in addition to electron transfer, pumping 2 protons/electron and generating a proton motive force. All the redox centers of this enzyme complex are located within the largest subunit, subunit I. Protons are probably pumped via D- and K- channels found in this subunit. In Buchnera aphidicola subsp. Acyrthosiphon pisum (strain APS) (Acyrthosiphon pisum symbiotic bacterium), this protein is Cytochrome bo(3) ubiquinol oxidase subunit 1 (cyoB).